A 368-amino-acid polypeptide reads, in one-letter code: Probable dual-specificity RNA methyltransferase RlmN (368 aa).

Glutamate 111 functions as the Proton acceptor in the catalytic mechanism. Residues 117-355 form the Radical SAM core domain; sequence YPNRATLCIS…CTVRDTRGQE (239 aa). A disulfide bond links cysteine 124 and cysteine 360. The [4Fe-4S] cluster site is built by cysteine 131, cysteine 135, and cysteine 138. S-adenosyl-L-methionine-binding positions include 181 to 182, serine 215, 238 to 240, and asparagine 317; these read GE and SLH. Catalysis depends on cysteine 360, which acts as the S-methylcysteine intermediate.

The protein belongs to the radical SAM superfamily. RlmN family. [4Fe-4S] cluster serves as cofactor.

It is found in the cytoplasm. It carries out the reaction adenosine(2503) in 23S rRNA + 2 reduced [2Fe-2S]-[ferredoxin] + 2 S-adenosyl-L-methionine = 2-methyladenosine(2503) in 23S rRNA + 5'-deoxyadenosine + L-methionine + 2 oxidized [2Fe-2S]-[ferredoxin] + S-adenosyl-L-homocysteine. The enzyme catalyses adenosine(37) in tRNA + 2 reduced [2Fe-2S]-[ferredoxin] + 2 S-adenosyl-L-methionine = 2-methyladenosine(37) in tRNA + 5'-deoxyadenosine + L-methionine + 2 oxidized [2Fe-2S]-[ferredoxin] + S-adenosyl-L-homocysteine. Specifically methylates position 2 of adenine 2503 in 23S rRNA and position 2 of adenine 37 in tRNAs. The sequence is that of Probable dual-specificity RNA methyltransferase RlmN from Corynebacterium diphtheriae (strain ATCC 700971 / NCTC 13129 / Biotype gravis).